The primary structure comprises 184 residues: GTP cyclohydrolase 1 (184 aa).

3 residues coordinate Zn(2+): cysteine 75, histidine 78, and cysteine 146.

It belongs to the GTP cyclohydrolase I family. Homomer.

It carries out the reaction GTP + H2O = 7,8-dihydroneopterin 3'-triphosphate + formate + H(+). It participates in cofactor biosynthesis; 7,8-dihydroneopterin triphosphate biosynthesis; 7,8-dihydroneopterin triphosphate from GTP: step 1/1. In Streptococcus pneumoniae (strain Taiwan19F-14), this protein is GTP cyclohydrolase 1.